The following is a 558-amino-acid chain: MAASEDGSSCLVSRGRSQSDPSFLSDSSATSTDAGENPDEMDQTPPARSEPLVSGIRTPPVRRNSKLATLGRIFKPWKWRKKKNEKLKQTTSALEKKMAGRQGREELIKQGLLEMMEQDSENKACSPKEGSQPVQSEPPAGEQETLTSEGAQPGSPSASGTDQVSQDELLSSDAHLDDTANIPSASTAEEADAGSLLPTTDEPSQALAGSDSLDSPPRSLERSVSQLPSPPLLPTPPPKASSKATKNVTGQAALFQGPSMKNNEPALRGQLATPTGSPHVTTVHRPLPPSRVMEELHRALATKHRQDSFQGRECRGSPKKRMDVRLSRTSSMERGKERDEAWSFDGASENKWTATKDSEENKENLMLSSELKDDMLLYQDEEALNDSIISGTLPRKCKKELLAVKLRNRPSKQELEDRNIFPRRTDEERQEIRQQIEMKLSKRLSQRPAVEELERRNILKQRNDQTEQEERREIKQRLTRKLNQRPTVDELRDRKILIRFSDYVEVARAQDYDRRADKPWTRLSAADKAAIRKELNEYKSNEMEVHASSKHLTRFHRP.

Residues 1–11 (MAASEDGSSCL) are compositionally biased toward polar residues. Disordered regions lie at residues 1 to 69 (MAAS…KLAT), 81 to 288 (KKKN…RPLP), and 300 to 366 (LATK…ENLM). Over residues 18–33 (QSDPSFLSDSSATSTD) the composition is skewed to low complexity. At threonine 69 the chain carries Phosphothreonine. Residues 92–117 (SALEKKMAGRQGREELIKQGLLEMME) form an RPEL 1 repeat. Basic and acidic residues predominate over residues 94–108 (LEKKMAGRQGREELI). The segment covering 144 to 169 (ETLTSEGAQPGSPSASGTDQVSQDEL) has biased composition (polar residues). A compositionally biased stretch (pro residues) spans 228–239 (PSPPLLPTPPPK). Position 229 is a phosphoserine (serine 229). Threonine 235 carries the post-translational modification Phosphothreonine. Basic and acidic residues-rich tracts occupy residues 300 to 341 (LATK…RDEA) and 354 to 363 (ATKDSEENKE). RPEL repeat units lie at residues 400-425 (ELLA…PRRT), 438-463 (MKLS…KQRN), and 476-501 (QRLT…IRFS). Residues 449–485 (AVEELERRNILKQRNDQTEQEERREIKQRLTRKLNQR) adopt a coiled-coil conformation.

This sequence belongs to the phosphatase and actin regulator family. In terms of assembly, binds PPP1CA and actin; thus inhibiting the protein phosphatase 1 (PP1) activity.

It localises to the nucleus matrix. The protein is Phosphatase and actin regulator 3 (Phactr3) of Mus musculus (Mouse).